Here is a 239-residue protein sequence, read N- to C-terminus: LexA repressor (239 aa).

The segment at residues 26–46 (FDEMKDALDLASKSGIHRLIT) is a DNA-binding region (H-T-H motif). Active-site for autocatalytic cleavage activity residues include serine 159 and lysine 197.

It belongs to the peptidase S24 family. In terms of assembly, homodimer.

The enzyme catalyses Hydrolysis of Ala-|-Gly bond in repressor LexA.. In terms of biological role, represses a number of genes involved in the response to DNA damage (SOS response), including recA and lexA. In the presence of single-stranded DNA, RecA interacts with LexA causing an autocatalytic cleavage which disrupts the DNA-binding part of LexA, leading to derepression of the SOS regulon and eventually DNA repair. The polypeptide is LexA repressor (Rhizobium etli (strain CIAT 652)).